Consider the following 119-residue polypeptide: Ribonuclease P protein component (119 aa).

The protein belongs to the RnpA family. In terms of assembly, consists of a catalytic RNA component (M1 or rnpB) and a protein subunit.

The enzyme catalyses Endonucleolytic cleavage of RNA, removing 5'-extranucleotides from tRNA precursor.. Its function is as follows. RNaseP catalyzes the removal of the 5'-leader sequence from pre-tRNA to produce the mature 5'-terminus. It can also cleave other RNA substrates such as 4.5S RNA. The protein component plays an auxiliary but essential role in vivo by binding to the 5'-leader sequence and broadening the substrate specificity of the ribozyme. The chain is Ribonuclease P protein component from Streptococcus pyogenes serotype M5 (strain Manfredo).